The primary structure comprises 498 residues: ATP synthase subunit beta, chloroplastic (498 aa).

172–179 serves as a coordination point for ATP; it reads GGAGVGKT.

This sequence belongs to the ATPase alpha/beta chains family. F-type ATPases have 2 components, CF(1) - the catalytic core - and CF(0) - the membrane proton channel. CF(1) has five subunits: alpha(3), beta(3), gamma(1), delta(1), epsilon(1). CF(0) has four main subunits: a(1), b(1), b'(1) and c(9-12).

The protein localises to the plastid. It is found in the chloroplast thylakoid membrane. It catalyses the reaction ATP + H2O + 4 H(+)(in) = ADP + phosphate + 5 H(+)(out). Produces ATP from ADP in the presence of a proton gradient across the membrane. The catalytic sites are hosted primarily by the beta subunits. The protein is ATP synthase subunit beta, chloroplastic of Licuala grandis (Ruffled fan palm).